A 49-amino-acid chain; its full sequence is GCKGFLVKCDSNSECCKTAIVKGKKKQLSCLCGAWGAGCSCSFRCGNRC.

Intrachain disulfides connect Cys-2/Cys-16, Cys-9/Cys-30, Cys-15/Cys-41, Cys-32/Cys-39, and Cys-45/Cys-49.

Expressed by the venom gland.

The protein localises to the secreted. In terms of biological role, potent toxin that may paralyze and/or kill insect pests such as H.virescens (lepidoptera), S.exigua (beet armyworm) and M.sexta (tobacco hornworm). The polypeptide is U3-plectoxin-Pt1a (Plectreurys tristis (Spider)).